We begin with the raw amino-acid sequence, 1196 residues long: Truncated transposon Ty1-A Gag-Pol polyprotein (1196 aa).

Residues asparagine 101 to proline 276 enclose the Integrase catalytic domain. Aspartate 112 and aspartate 177 together coordinate Mg(2+). Disordered stretches follow at residues serine 397 to lysine 528, arginine 533 to proline 552, and aspartate 571 to threonine 628. A compositionally biased stretch (low complexity) spans serine 401–threonine 410. The span at serine 446–threonine 456 shows a compositional bias: polar residues. The segment covering glutamate 479–serine 494 has biased composition (basic and acidic residues). Composition is skewed to polar residues over residues tyrosine 495–aspartate 523 and proline 542–proline 552. The short motif at lysine 619–arginine 653 is the Bipartite nuclear localization signal element. A Reverse transcriptase Ty1/copia-type domain is found at asparagine 779–glutamine 917. Aspartate 787, aspartate 868, aspartate 869, aspartate 1051, glutamate 1093, and aspartate 1126 together coordinate Mg(2+). The region spanning aspartate 1051–lysine 1193 is the RNase H Ty1/copia-type domain.

Post-translationally, initially, virus-like particles (VLPs) are composed of the structural unprocessed proteins Gag and Gag-Pol, and also contain the host initiator methionine tRNA (tRNA(i)-Met) which serves as a primer for minus-strand DNA synthesis, and a dimer of genomic Ty RNA. Processing of the polyproteins occurs within the particle and proceeds by an ordered pathway, called maturation. First, the protease (PR) is released by autocatalytic cleavage of the Gag-Pol polyprotein yielding capsid protein p45 and a Pol-p154 precursor protein. This cleavage is a prerequisite for subsequent processing of Pol-p154 at the remaining sites to release the mature structural and catalytic proteins. Maturation takes place prior to the RT reaction and is required to produce transposition-competent VLPs.

Its subcellular location is the cytoplasm. It is found in the nucleus. The catalysed reaction is DNA(n) + a 2'-deoxyribonucleoside 5'-triphosphate = DNA(n+1) + diphosphate. The enzyme catalyses Endonucleolytic cleavage to 5'-phosphomonoester.. Its function is as follows. Reverse transcriptase/ribonuclease H (RT) is a multifunctional enzyme that catalyzes the conversion of the retro-elements RNA genome into dsDNA within the VLP. The enzyme displays a DNA polymerase activity that can copy either DNA or RNA templates, and a ribonuclease H (RNase H) activity that cleaves the RNA strand of RNA-DNA heteroduplexes during plus-strand synthesis and hydrolyzes RNA primers. The conversion leads to a linear dsDNA copy of the retrotransposon that includes long terminal repeats (LTRs) at both ends. In terms of biological role, integrase (IN) targets the VLP to the nucleus, where a subparticle preintegration complex (PIC) containing at least integrase and the newly synthesized dsDNA copy of the retrotransposon must transit the nuclear membrane. Once in the nucleus, integrase performs the integration of the dsDNA into the host genome. The polypeptide is Truncated transposon Ty1-A Gag-Pol polyprotein (TY1B-A) (Saccharomyces cerevisiae (strain ATCC 204508 / S288c) (Baker's yeast)).